Consider the following 315-residue polypeptide: Pantothenate kinase (315 aa).

94–101 lines the ATP pocket; the sequence is GSVAVGKS.

Belongs to the prokaryotic pantothenate kinase family.

It is found in the cytoplasm. It carries out the reaction (R)-pantothenate + ATP = (R)-4'-phosphopantothenate + ADP + H(+). The protein operates within cofactor biosynthesis; coenzyme A biosynthesis; CoA from (R)-pantothenate: step 1/5. The sequence is that of Pantothenate kinase from Shewanella amazonensis (strain ATCC BAA-1098 / SB2B).